The following is a 485-amino-acid chain: Ataxin-10 (485 aa).

It belongs to the ataxin-10 family.

The protein resides in the cytoplasm. Its subcellular location is the perinuclear region. The protein localises to the midbody. Its function is as follows. May play a role in the regulation of cytokinesis. May play a role in signaling by stimulating protein glycosylation. Induces neuritogenesis by activating the Ras-MAP kinase pathway and is necessary for the survival of cerebellar neurons. Does not appear to play a major role in ciliogenesis. The sequence is that of Ataxin-10 (atxn10) from Xenopus tropicalis (Western clawed frog).